Consider the following 38-residue polypeptide: FDGRNAAANDKASDLVALTVRGCCSHPACSVNHPELCG.

Positions 1–21 (FDGRNAAANDKASDLVALTVR) are excised as a propeptide. 2 cysteine pairs are disulfide-bonded: Cys-23–Cys-29 and Cys-24–Cys-37. A ser-Xaa-Pro motif, crucial for potent interaction with nAChR region spans residues 25–27 (SHP). Cys-37 bears the Cysteine amide mark.

Belongs to the conotoxin A superfamily. The hydroxylation at position Pro-27 is critical, since an hydroxylation at this position decreases potency of the toxin to inhibit both alpha-3-beta-2 (1300-fold) and alpha-6/alpha-3-beta-2-beta-3 (130-fold) nAChRs. In terms of processing, a non-modified residue at position Pro-34 is critical, since a hydroxylation at this position decreases potency of the toxin to inhibit alpha-3-beta-2 (1-45-fold) and increases potency to inhibit alpha-6/alpha-3-beta-2-beta-3 (1.77-fold) nAChRs. As to expression, expressed by the venom duct.

Its subcellular location is the secreted. Functionally, alpha-conotoxins act on postsynaptic membranes, they bind to the nicotinic acetylcholine receptors (nAChR) and thus inhibit them. This synthetic peptide potently and reversibly blocks alpha-9-alpha-10/CHRNA9-CHRNA10 nAChR (IC(50)=6.9-54.9 nM), alpha-3-beta-2/CHRNA3-CHRNB2 (IC(50)=9.7-97.5 nM) and alpha-6/alpha-3-beta-2-beta-3 (CHRNA6/CHRNA3-CHRNB2-CHRNB3) (IC(50)=11.1-17.2 nM). It also inhibits alpha-6/alpha-3-beta-4 (CHRNA6/CHRNA3-CHRNB4) nAChR with a higher potency on human (IC(50)=6.75 nM) than on rat receptors (IC(50)=130-147 nM). Also shows a weak ability to inhibit alpha-3-beta-4/CHRNA3-CHRNB4 (IC(50)=480-1500 nM). This synthetic toxin also inhibits N-type calcium channels (Ca2.2/CACNA1B) (IC(50)=1.1 nM) via the activation of the G protein-coupled GABA(B) receptor in DRG neurons. Also exhibits inhibition of D.melanogaster alpha-7/CHRNA7 nAChRs. This chain is Alpha-conotoxin PeIA, found in Conus pergrandis (Grand cone).